Here is a 333-residue protein sequence, read N- to C-terminus: Ketol-acid reductoisomerase (NADP(+)) (333 aa).

The region spanning 6-186 (TRVYTECDAD…GALRAGAIQT (181 aa)) is the KARI N-terminal Rossmann domain. NADP(+) contacts are provided by residues 29–32 (YGSQ), Lys52, Ser55, Ser57, and 87–90 (DPAQ). His112 is an active-site residue. Gly138 provides a ligand contact to NADP(+). One can recognise a KARI C-terminal knotted domain in the interval 187–332 (TFTEETETDL…ARLRALFSWS (146 aa)). 4 residues coordinate Mg(2+): Asp195, Glu199, Glu231, and Glu235. Ser256 is a substrate binding site.

It belongs to the ketol-acid reductoisomerase family. The cofactor is Mg(2+).

It carries out the reaction (2R)-2,3-dihydroxy-3-methylbutanoate + NADP(+) = (2S)-2-acetolactate + NADPH + H(+). It catalyses the reaction (2R,3R)-2,3-dihydroxy-3-methylpentanoate + NADP(+) = (S)-2-ethyl-2-hydroxy-3-oxobutanoate + NADPH + H(+). It participates in amino-acid biosynthesis; L-isoleucine biosynthesis; L-isoleucine from 2-oxobutanoate: step 2/4. Its pathway is amino-acid biosynthesis; L-valine biosynthesis; L-valine from pyruvate: step 2/4. Its function is as follows. Involved in the biosynthesis of branched-chain amino acids (BCAA). Catalyzes an alkyl-migration followed by a ketol-acid reduction of (S)-2-acetolactate (S2AL) to yield (R)-2,3-dihydroxy-isovalerate. In the isomerase reaction, S2AL is rearranged via a Mg-dependent methyl migration to produce 3-hydroxy-3-methyl-2-ketobutyrate (HMKB). In the reductase reaction, this 2-ketoacid undergoes a metal-dependent reduction by NADPH to yield (R)-2,3-dihydroxy-isovalerate. This Tropheryma whipplei (strain TW08/27) (Whipple's bacillus) protein is Ketol-acid reductoisomerase (NADP(+)).